A 409-amino-acid chain; its full sequence is S-adenosylmethionine synthase (409 aa).

141–146 (GQGSAD) is an ATP binding site.

The protein belongs to the AdoMet synthase 2 family. The cofactor is Mg(2+).

It catalyses the reaction L-methionine + ATP + H2O = S-adenosyl-L-methionine + phosphate + diphosphate. The protein operates within amino-acid biosynthesis; S-adenosyl-L-methionine biosynthesis; S-adenosyl-L-methionine from L-methionine: step 1/1. Its function is as follows. Catalyzes the formation of S-adenosylmethionine from methionine and ATP. The chain is S-adenosylmethionine synthase from Hyperthermus butylicus (strain DSM 5456 / JCM 9403 / PLM1-5).